A 707-amino-acid polypeptide reads, in one-letter code: Translation initiation factor eIF2B subunit epsilon (707 aa).

Disordered regions lie at residues 489–526 (HDDIESDESGDEGDKSGGKIKNNKNNDDNPIEPDSVKF) and 686–707 (AEEESDDSDDSDDDDDDSDESD). Residues 516-693 (DNPIEPDSVK…KSAEEESDDS (178 aa)) form the W2 domain. Over residues 688–707 (EESDDSDDSDDDDDDSDESD) the composition is skewed to acidic residues.

This sequence belongs to the eIF-2B gamma/epsilon subunits family. As to quaternary structure, component of the translation initiation factor 2B (eIF2B) complex which is a heterodecamer of two sets of five different subunits: alpha, beta, gamma, delta and epsilon. Subunits alpha, beta and delta comprise a regulatory subcomplex and subunits epsilon and gamma comprise a catalytic subcomplex. Within the complex, the hexameric regulatory complex resides at the center, with the two heterodimeric catalytic subcomplexes bound on opposite sides.

It is found in the cytoplasm. Its subcellular location is the cytosol. Functionally, acts as a component of the translation initiation factor 2B (eIF2B) complex, which catalyzes the exchange of GDP for GTP on eukaryotic initiation factor 2 (eIF2) gamma subunit. Its guanine nucleotide exchange factor activity is repressed when bound to eIF2 complex phosphorylated on the alpha subunit, thereby limiting the amount of methionyl-initiator methionine tRNA available to the ribosome and consequently global translation is repressed. The polypeptide is Translation initiation factor eIF2B subunit epsilon (eif2b5) (Dictyostelium discoideum (Social amoeba)).